The following is a 184-amino-acid chain: MPIDAWVREEVEIPEGVEVTIERNVVKVRGPKGELERELKYPGVQIFTEDGKVVIYKEFPRKKDIAIARTFKAHIANMIKGVTEGFTYKLKVVYSHFPMTVKVQGDEVVIENFLGEKNPRRAKILPGVTVKVMGSEVIVEGIDKEAVGQTAANIEQATRITKWDRRVFQDGIYIVEKAGKPIKF.

The protein belongs to the universal ribosomal protein uL6 family. As to quaternary structure, part of the 50S ribosomal subunit.

In terms of biological role, this protein binds to the 23S rRNA, and is important in its secondary structure. It is located near the subunit interface in the base of the L7/L12 stalk, and near the tRNA binding site of the peptidyltransferase center. The chain is Large ribosomal subunit protein uL6 from Thermococcus onnurineus (strain NA1).